Here is a 339-residue protein sequence, read N- to C-terminus: MTIPSASKTLVTVYGATGSQGGSVARSLLQNTEFAVRAITRNASSTSAQNLKALGAEVVQADGWNKSQVQEAFSGSWAAFVNTNSEDPMFMSDDGPTEFDLGKIIIDGIVESGSVEHLVYSSAVSTSAFTQGEVTAKAAEMKSRVEKYAMATGYFKSVCPVYAGWYMELFNNTDFARVFGGFPKFPDAEGYLTLSTPRWGAKTDMPVPWVAVEKDFGDIVHGVLLAPERYHGKVIPALSDASSFPQVVDAFQSATGKNVRYVRQAKWDMFGAGIPELEDQRRLFHFGELTNGKYFGDEPTSTTVPAYLKAQAAKAKNKGVDDEAELLTLNQWFRSGFRQ.

Residue Lys-142 participates in NADP(+) binding.

It belongs to the NmrA-type oxidoreductase family.

It carries out the reaction didehydrocampesine A + 2 AH2 = campesine A + 2 A. The protein operates within alkaloid biosynthesis. In terms of biological role, oxidoreductase; part of the gene cluster that mediates the biosynthesis of campesine G, a dimeric indole piperazine alkaloid that shows good insecticidal activity Galleria mellonella. Within the pathway, cpsB reduces the unstable (S,S)-trypyl-valyl dihydropiperazine (didehydrocampesine A) intermediate to (S, S)-trypyl-valyl-piperazine (campesine A) using two equivalents of NAD(P)H. The non-canonical non-ribosomal peptide synthetase cpsA catalyzes the first steps of the pathway by producing L-tryptophanal and L-valinal from their respective amino-acids. These products condensate spontaneously to form trypyl-valyl pyrazine also known as didehydrocampesine A. The NmrA-like family domain-containing oxidoreductase cpsB is the next enzyme in cps pathway and reduces the unstable didehydrocampesine A to campesine A. The methyltransferase cpsF and the acetyltransferase cpsE both recognize N13 of piperazine ring to carry out methylation and acetylation of campesine A to produce campesine C and B, respectively. The cytochrome P450 monooxygenase cpsD then acts as a dimerase that catalyzes oxidative heterocoupling between campesine B and C to produce heterodimers with unexpected 6/5/6/6/6/6/5/6 eight-ring scaffold called campesine D. Finally,the cytochrome P450 monooxygenase cpsC is a regioselective dehydrogenase that catalyzes dehydrogenation reaction towards C2-N1 to produce campesine G. The sequence is that of NmrA-like family domain-containing oxidoreductase cpsB from Aspergillus campestris (strain IBT 28561).